We begin with the raw amino-acid sequence, 925 residues long: Ubp5-interacting protein ftp105 (925 aa).

The segment covering 650-664 (EGSSDFESKSSDNTS) has biased composition (low complexity). Positions 650-671 (EGSSDFESKSSDNTSLDGTPLQ) are disordered.

It belongs to the hid-1 family. Interacts with ubp5.

It localises to the cytoplasm. The protein resides in the golgi apparatus. Functionally, required for the localization of ubp5 to the Golgi apparatus. Involved in detoxification of cadmium ion. This is Ubp5-interacting protein ftp105 (ftp105) from Schizosaccharomyces pombe (strain 972 / ATCC 24843) (Fission yeast).